A 623-amino-acid polypeptide reads, in one-letter code: V-type proton ATPase catalytic subunit A (623 aa).

252 to 259 (GAFGCGKT) contributes to the ATP binding site.

Belongs to the ATPase alpha/beta chains family. V-ATPase is a heteromultimeric enzyme composed of a peripheral catalytic V1 complex (main components: subunits A, B, C, D, E, and F) attached to an integral membrane V0 proton pore complex (main component: the proteolipid protein).

It carries out the reaction ATP + H2O + 4 H(+)(in) = ADP + phosphate + 5 H(+)(out). In terms of biological role, catalytic subunit of the peripheral V1 complex of vacuolar ATPase. V-ATPase vacuolar ATPase is responsible for acidifying a variety of intracellular compartments in eukaryotic cells. The protein is V-type proton ATPase catalytic subunit A of Daucus carota (Wild carrot).